A 620-amino-acid polypeptide reads, in one-letter code: 1-deoxy-D-xylulose-5-phosphate synthase (620 aa).

Residues histidine 80 and 121–123 (GHS) each bind thiamine diphosphate. Position 152 (aspartate 152) interacts with Mg(2+). Residues 153–154 (GA), asparagine 181, tyrosine 288, and glutamate 370 each bind thiamine diphosphate. Residue asparagine 181 coordinates Mg(2+).

It belongs to the transketolase family. DXPS subfamily. Homodimer. Mg(2+) is required as a cofactor. Thiamine diphosphate serves as cofactor.

The catalysed reaction is D-glyceraldehyde 3-phosphate + pyruvate + H(+) = 1-deoxy-D-xylulose 5-phosphate + CO2. Its pathway is metabolic intermediate biosynthesis; 1-deoxy-D-xylulose 5-phosphate biosynthesis; 1-deoxy-D-xylulose 5-phosphate from D-glyceraldehyde 3-phosphate and pyruvate: step 1/1. Its function is as follows. Catalyzes the acyloin condensation reaction between C atoms 2 and 3 of pyruvate and glyceraldehyde 3-phosphate to yield 1-deoxy-D-xylulose-5-phosphate (DXP). The protein is 1-deoxy-D-xylulose-5-phosphate synthase of Cronobacter sakazakii (strain ATCC BAA-894) (Enterobacter sakazakii).